The sequence spans 504 residues: Putative BTB/POZ domain-containing protein R842 (504 aa).

Residues 21–91 enclose the BTB domain; the sequence is SDVKLILKDN…FYGFKSPSVT (71 aa).

It belongs to the mimivirus BTB/WD family.

The sequence is that of Putative BTB/POZ domain-containing protein R842 from Acanthamoeba polyphaga (Amoeba).